The primary structure comprises 389 residues: viridiflorene synthase Agr2 (389 aa).

An N-terminal signal peptide occupies residues 1–15 (MVWDFVLSLFHSLLA). 4 residues coordinate Mg(2+): D128, N263, S267, and E271. Residues 128–132 (DEVTD) carry the DDXXD motif motif. Positions 360 and 361 each coordinate (2E,6E)-farnesyl diphosphate.

It belongs to the terpene synthase family. Mg(2+) serves as cofactor.

The enzyme catalyses (2E,6E)-farnesyl diphosphate = viridiflorene + diphosphate. Terpene cyclase that catalyzes the cyclization of farnesyl diphosphate (FPP) to viridiflorene. This is viridiflorene synthase Agr2 from Cyclocybe aegerita (Black poplar mushroom).